A 337-amino-acid polypeptide reads, in one-letter code: Glyceraldehyde-3-phosphate dehydrogenase 1, cytosolic (337 aa).

Residues 1–151 (MGKIKIGING…YTSDVNIVSN (151 aa)) are binding to NAD. Residues 13–14 (RI), D35, and R82 contribute to the NAD(+) site. The catalytic stretch occupies residues 152–337 (ASCTTNCLAP…DLIRHMFKTQ (186 aa)). D-glyceraldehyde 3-phosphate contacts are provided by residues 153–155 (SCT), T184, 213–214 (TG), and R236. C154 serves as the catalytic Nucleophile. NAD(+) is bound at residue N318.

This sequence belongs to the glyceraldehyde-3-phosphate dehydrogenase family. Homotetramer.

It localises to the cytoplasm. It carries out the reaction D-glyceraldehyde 3-phosphate + phosphate + NAD(+) = (2R)-3-phospho-glyceroyl phosphate + NADH + H(+). The protein operates within carbohydrate degradation; glycolysis; pyruvate from D-glyceraldehyde 3-phosphate: step 1/5. Functionally, key enzyme in glycolysis that catalyzes the first step of the pathway by converting D-glyceraldehyde 3-phosphate (G3P) into 3-phospho-D-glyceroyl phosphate. Essential for the maintenance of cellular ATP levels and carbohydrate metabolism. The sequence is that of Glyceraldehyde-3-phosphate dehydrogenase 1, cytosolic (GAPC1) from Zea mays (Maize).